Reading from the N-terminus, the 347-residue chain is Phosphate acyltransferase (347 aa).

Belongs to the PlsX family. In terms of assembly, homodimer. Probably interacts with PlsY.

Its subcellular location is the cytoplasm. The catalysed reaction is a fatty acyl-[ACP] + phosphate = an acyl phosphate + holo-[ACP]. The protein operates within lipid metabolism; phospholipid metabolism. Catalyzes the reversible formation of acyl-phosphate (acyl-PO(4)) from acyl-[acyl-carrier-protein] (acyl-ACP). This enzyme utilizes acyl-ACP as fatty acyl donor, but not acyl-CoA. The sequence is that of Phosphate acyltransferase from Syntrophotalea carbinolica (strain DSM 2380 / NBRC 103641 / GraBd1) (Pelobacter carbinolicus).